The following is a 178-amino-acid chain: Bifunctional protein PyrR (178 aa).

Positions 99 to 111 (VILVDDVLFTGRT) match the PRPP-binding motif.

It belongs to the purine/pyrimidine phosphoribosyltransferase family. PyrR subfamily. As to quaternary structure, homodimer and homohexamer; in equilibrium.

It carries out the reaction UMP + diphosphate = 5-phospho-alpha-D-ribose 1-diphosphate + uracil. Functionally, regulates transcriptional attenuation of the pyrimidine nucleotide (pyr) operon by binding in a uridine-dependent manner to specific sites on pyr mRNA. This disrupts an antiterminator hairpin in the RNA and favors formation of a downstream transcription terminator, leading to a reduced expression of downstream genes. In terms of biological role, also displays a weak uracil phosphoribosyltransferase activity which is not physiologically significant. The protein is Bifunctional protein PyrR of Ligilactobacillus salivarius (strain UCC118) (Lactobacillus salivarius).